Consider the following 254-residue polypeptide: Type III pantothenate kinase (254 aa).

7–14 lines the ATP pocket; sequence DIGNTRLK. Residues Y97 and 104-107 each bind substrate; that span reads GSDR. D106 serves as the catalytic Proton acceptor. T134 lines the ATP pocket. T184 is a binding site for substrate.

This sequence belongs to the type III pantothenate kinase family. As to quaternary structure, homodimer. NH4(+) serves as cofactor. The cofactor is K(+).

It localises to the cytoplasm. The catalysed reaction is (R)-pantothenate + ATP = (R)-4'-phosphopantothenate + ADP + H(+). It participates in cofactor biosynthesis; coenzyme A biosynthesis; CoA from (R)-pantothenate: step 1/5. Its function is as follows. Catalyzes the phosphorylation of pantothenate (Pan), the first step in CoA biosynthesis. In Methylibium petroleiphilum (strain ATCC BAA-1232 / LMG 22953 / PM1), this protein is Type III pantothenate kinase.